Here is a 109-residue protein sequence, read N- to C-terminus: Large ribosomal subunit protein uL22 (109 aa).

The protein belongs to the universal ribosomal protein uL22 family. As to quaternary structure, part of the 50S ribosomal subunit.

In terms of biological role, this protein binds specifically to 23S rRNA; its binding is stimulated by other ribosomal proteins, e.g. L4, L17, and L20. It is important during the early stages of 50S assembly. It makes multiple contacts with different domains of the 23S rRNA in the assembled 50S subunit and ribosome. The globular domain of the protein is located near the polypeptide exit tunnel on the outside of the subunit, while an extended beta-hairpin is found that lines the wall of the exit tunnel in the center of the 70S ribosome. The chain is Large ribosomal subunit protein uL22 from Cupriavidus necator (strain ATCC 17699 / DSM 428 / KCTC 22496 / NCIMB 10442 / H16 / Stanier 337) (Ralstonia eutropha).